The following is a 718-amino-acid chain: Protein Hook homolog 3 (718 aa).

Met-1 is subject to N-acetylmethionine. Residues 1 to 164 (MFNVESVERV…QELMSKESPV (164 aa)) are sufficient for interaction with microtubules. Ser-6 bears the Phosphoserine mark. Residues 10–126 (VELCESLLTW…RMLQLILGCA (117 aa)) enclose the Calponin-homology (CH) domain. Coiled coils occupy residues 168–433 (HDAY…VQAQ) and 462–663 (EIRE…MEEK). Ser-238 carries the phosphoserine modification. The sufficient for interaction with IIGP1 stretch occupies residues 450 to 671 (SSDSLAAEIV…EKYIVSAWYN (222 aa)). Positions 553-718 (EKLHEANNEL…PGHVQPATAR (166 aa)) are required for association with Golgi. Residues 682 to 718 (EDRLASTGSGQSFLARQRQATSTRRSYPGHVQPATAR) are disordered. The span at 687-706 (STGSGQSFLARQRQATSTRR) shows a compositional bias: polar residues. 2 positions are modified to phosphoserine: Ser-693 and Ser-707.

This sequence belongs to the hook family. Self-associates. Component of the FTS/Hook/FHIP complex (FHF complex), composed of AKTIP/FTS, FHIP1B, and one or more members of the Hook family of proteins HOOK1, HOOK2, and HOOK3. May interact directly with AKTIP/FTS, HOOK1 and HOOK2. Associates with several subunits of the homotypic vesicular sorting complex (the HOPS complex) including VPS16 and VPS41; these interactions may be indirect. Interacts with IIGP1. Interacts with MSR1, and this association is stimulated by ligand binding to MSR1. Interacts with microtubules. Part of a tripartite complex with dynein and dynactin, acts an adapter linking the dynein motor complex and dynactin. Interacts with dynein intermediate chain and dynactin (DCTN1). Interacts with CCDC181. Interacts with LRGUK. In terms of assembly, (Microbial infection) Interacts with Salmonella typhimurium spiC. Expressed in brain, cerebellum, heart, intestine, kidney, liver, lung, skeletal muscle, spleen and stomach (at protein level).

The protein resides in the cytoplasm. It is found in the cytoskeleton. Its subcellular location is the golgi apparatus. Functionally, acts as an adapter protein linking the dynein motor complex to various cargos and converts dynein from a non-processive to a highly processive motor in the presence of dynactin. Facilitates the interaction between dynein and dynactin and activates dynein processivity (the ability to move along a microtubule for a long distance without falling off the track). Predominantly recruits 2 dyneins, which increases both the force and speed of the microtubule motor. Component of the FTS/Hook/FHIP complex (FHF complex). The FHF complex may function to promote vesicle trafficking and/or fusion via the homotypic vesicular protein sorting complex (the HOPS complex). May regulate clearance of endocytosed receptors such as MSR1. Participates in defining the architecture and localization of the Golgi complex. FHF complex promotes the distribution of AP-4 complex to the perinuclear area of the cell. Its function is as follows. (Microbial infection) Serves as a target for the spiC protein from Salmonella typhimurium, which inactivates it, leading to a strong alteration in cellular trafficking. The polypeptide is Protein Hook homolog 3 (Hook3) (Mus musculus (Mouse)).